A 209-amino-acid polypeptide reads, in one-letter code: Transmembrane 4 L6 family member 19 (209 aa).

Topologically, residues 1–16 (MVSSPCTQASSRTCSR) are cytoplasmic. A helical transmembrane segment spans residues 17-37 (ILGLSLGTAALFAAGANVALL). Over 38–59 (LPNWDVTYLLRGLLGRHAMLGT) the chain is Extracellular. The helical transmembrane segment at 60 to 80 (GLWGGGLMVLTAAILISLMGW) threads the bilayer. Residues 81 to 93 (RYGCFSKSGLCRS) are Cytoplasmic-facing. A helical transmembrane segment spans residues 94-114 (VLTALLSGGLALLGALICFVT). The Extracellular segment spans residues 115–175 (SGVALKDGPF…PSAAVVWHVS (61 aa)). N-linked (GlcNAc...) asparagine glycosylation occurs at N133. The chain crosses the membrane as a helical span at residues 176–196 (LFSALLCISLLQLLLVVVHVI). The interval 186 to 196 (LQLLLVVVHVI) is important for homodimerization. Residues 197–209 (NSLLGLFCSLCEK) lie on the Cytoplasmic side of the membrane.

Belongs to the L6 tetraspanin family. May form homodimers and homooligomers. Interacts with integrins ITGAV and ITGB3. Interacts with components of members of the V0 complex of vacuolar(H+)-ATPase (V-ATPase), including ATP6V0B and ATP6V0D2; this interaction inhibits V1-V0 complex assembly. As to expression, in adipose tissue, expressed by macrophages.

Its subcellular location is the lysosome membrane. The protein resides in the cytoplasm. It localises to the cytoskeleton. It is found in the cell projection. The protein localises to the filopodium. In terms of biological role, negatively regulates vacuolar (H+)-ATPase (V-ATPase) activity by interacting with members of V-ATPase V0 complex and hence inhibiting V1-V0 complex assembly. Required for multinucleation during osteoclast differentiation. This is Transmembrane 4 L6 family member 19 (TM4SF19) from Homo sapiens (Human).